A 423-amino-acid chain; its full sequence is Putative competence-damage inducible protein (423 aa).

The protein belongs to the CinA family.

The chain is Putative competence-damage inducible protein from Streptococcus pyogenes serotype M3 (strain ATCC BAA-595 / MGAS315).